A 342-amino-acid polypeptide reads, in one-letter code: MQALNTTSLTLSDNRLLILDQQALPQEKQWRSCDSVEELVDHILTLRVRGAPLIGLSASLLLALLAERGVPRKELEQALITLRASRPTAVNLMNNLDRMKLALAQPQWVPAMVEEAQRLVEEDRKLCDRIADHGAGLVKPGSRLLTHCNTGGLATAGIGTAIGVLLRAHQQGKVQQVWVDETRPLLQGGRLTAWELGELGIPYRLICDSMAASLMAQGQVDAVWVGADRIAANGDVANKIGTYSLAVLAHYHRIPFYVAAPHTTHDPHCPNGAAIAIEQRAAVEVTGVTGSFGSCQWAPVDAPVYNPAFDVTPAALISGWVFDSGVITPQQVSEGIFQRALG.

Residues arginine 49–alanine 51, arginine 86, and glutamine 187 each bind substrate. The active-site Proton donor is the aspartate 228. Residue asparagine 238–lysine 239 coordinates substrate.

This sequence belongs to the eIF-2B alpha/beta/delta subunits family. MtnA subfamily.

The enzyme catalyses 5-(methylsulfanyl)-alpha-D-ribose 1-phosphate = 5-(methylsulfanyl)-D-ribulose 1-phosphate. The protein operates within amino-acid biosynthesis; L-methionine biosynthesis via salvage pathway; L-methionine from S-methyl-5-thio-alpha-D-ribose 1-phosphate: step 1/6. Its function is as follows. Catalyzes the interconversion of methylthioribose-1-phosphate (MTR-1-P) into methylthioribulose-1-phosphate (MTRu-1-P). The sequence is that of Methylthioribose-1-phosphate isomerase from Serratia proteamaculans (strain 568).